Consider the following 385-residue polypeptide: Cell division protein FtsZ (385 aa).

Residues 37 to 41, 125 to 127, E156, K160, and D204 contribute to the GTP site; these read GGGSN and GTG.

This sequence belongs to the FtsZ family. In terms of assembly, homodimer. Polymerizes to form a dynamic ring structure in a strictly GTP-dependent manner. Interacts directly with several other division proteins.

Its subcellular location is the cytoplasm. Its function is as follows. Essential cell division protein that forms a contractile ring structure (Z ring) at the future cell division site. The regulation of the ring assembly controls the timing and the location of cell division. One of the functions of the FtsZ ring is to recruit other cell division proteins to the septum to produce a new cell wall between the dividing cells. Binds GTP and shows GTPase activity. This Helicobacter pylori (strain ATCC 700392 / 26695) (Campylobacter pylori) protein is Cell division protein FtsZ.